The sequence spans 64 residues: Thrombin-like enzyme collinein-4 (64 aa).

Intrachain disulfides connect C5–C23 and C34–C51.

In terms of assembly, monomer. As to expression, expressed by the vanom gland.

The protein localises to the secreted. Its function is as follows. Thrombin-like snake venom serine protease. The polypeptide is Thrombin-like enzyme collinein-4 (Crotalus durissus collilineatus (Brazilian rattlesnake)).